The following is a 215-amino-acid chain: Adenylate kinase (215 aa).

10–15 (GCGKGT) is a binding site for ATP. An NMP region spans residues 30–59 (STGDIFRQTIDQKGPYWEELKSYISKGLLV). Residues threonine 31, arginine 36, 57–59 (LLV), and glutamine 91 each bind AMP. The tract at residues 120-157 (GRRICSKCKRIYNIHYSAPKKEDICDDDGEFLIQRKDD) is LID. Arginine 121 serves as a coordination point for ATP. Cysteine 124 and cysteine 127 together coordinate Zn(2+). Residue 130 to 131 (IY) coordinates ATP. Zn(2+) is bound by residues cysteine 144 and aspartate 147. AMP is bound by residues arginine 154 and arginine 165.

Belongs to the adenylate kinase family. As to quaternary structure, monomer.

The protein localises to the cytoplasm. It catalyses the reaction AMP + ATP = 2 ADP. It participates in purine metabolism; AMP biosynthesis via salvage pathway; AMP from ADP: step 1/1. Catalyzes the reversible transfer of the terminal phosphate group between ATP and AMP. Plays an important role in cellular energy homeostasis and in adenine nucleotide metabolism. The sequence is that of Adenylate kinase from Malacoplasma penetrans (strain HF-2) (Mycoplasma penetrans).